Here is a 491-residue protein sequence, read N- to C-terminus: Protein nucleotidyltransferase YdiU (491 aa).

ATP-binding residues include Gly94, Gly96, Arg97, Lys117, Asp129, Gly130, Arg180, and Arg187. Catalysis depends on Asp256, which acts as the Proton acceptor. Mg(2+)-binding residues include Asn257 and Asp266. An ATP-binding site is contributed by Asp266.

This sequence belongs to the SELO family. Requires Mg(2+) as cofactor. Mn(2+) serves as cofactor.

It catalyses the reaction L-seryl-[protein] + ATP = 3-O-(5'-adenylyl)-L-seryl-[protein] + diphosphate. The catalysed reaction is L-threonyl-[protein] + ATP = 3-O-(5'-adenylyl)-L-threonyl-[protein] + diphosphate. The enzyme catalyses L-tyrosyl-[protein] + ATP = O-(5'-adenylyl)-L-tyrosyl-[protein] + diphosphate. It carries out the reaction L-histidyl-[protein] + UTP = N(tele)-(5'-uridylyl)-L-histidyl-[protein] + diphosphate. It catalyses the reaction L-seryl-[protein] + UTP = O-(5'-uridylyl)-L-seryl-[protein] + diphosphate. The catalysed reaction is L-tyrosyl-[protein] + UTP = O-(5'-uridylyl)-L-tyrosyl-[protein] + diphosphate. Functionally, nucleotidyltransferase involved in the post-translational modification of proteins. It can catalyze the addition of adenosine monophosphate (AMP) or uridine monophosphate (UMP) to a protein, resulting in modifications known as AMPylation and UMPylation. This is Protein nucleotidyltransferase YdiU from Clostridium botulinum (strain Alaska E43 / Type E3).